The primary structure comprises 354 residues: Protein Wnt-11 (354 aa).

A signal peptide spans 1-23 (MTEYRNFLLLFITSLSVIYPCTG). 3 N-linked (GlcNAc...) asparagine glycosylation sites follow: Asn-32, Asn-39, and Asn-89. Intrachain disulfides connect Cys-129–Cys-137, Cys-139–Cys-156, Cys-209–Cys-223, Cys-211–Cys-218, Cys-283–Cys-314, Cys-299–Cys-309, Cys-329–Cys-344, Cys-331–Cys-341, and Cys-336–Cys-337. Ser-215 carries O-palmitoleoyl serine; by PORCN lipidation. The N-linked (GlcNAc...) asparagine glycan is linked to Asn-300.

It belongs to the Wnt family. Post-translationally, palmitoleoylation is required for efficient binding to frizzled receptors. Depalmitoleoylation leads to Wnt signaling pathway inhibition.

The protein localises to the secreted. The protein resides in the extracellular space. Its subcellular location is the extracellular matrix. In terms of biological role, ligand for fzd5, a member of the G-protein coupled frizzled receptor family. Plays a role in early eye development, possibly through wnt non-canonical signaling. Promotes eye formation, at least partially, by antagonizing the Wnt/beta-catenin pathway. In addition, promotes coherence of eye field cells, potentially contributing to the coordinated morphogenetic behaviors of cells in the nascent eye field. The sequence is that of Protein Wnt-11 (wnt11) from Danio rerio (Zebrafish).